Reading from the N-terminus, the 173-residue chain is MTPNQKDGPRSNQEIRVPCIQLINDEGQNQGIVSTQEALAMAANIGLDLVEIVPNAEPPVCKIVDLGKLKYQNQKKAAETRKKQKIIEIKEIKLRPNVDVHDYGVKLKAIHRFIEHGNKVKITLRFRGREMAHQDLGVKLLERMKEDVSEIAKIESEPKLENRQMMMVIAPKS.

It belongs to the IF-3 family. In terms of assembly, monomer.

The protein localises to the cytoplasm. IF-3 binds to the 30S ribosomal subunit and shifts the equilibrium between 70S ribosomes and their 50S and 30S subunits in favor of the free subunits, thus enhancing the availability of 30S subunits on which protein synthesis initiation begins. The protein is Translation initiation factor IF-3 of Bartonella bacilliformis (strain ATCC 35685 / KC583 / Herrer 020/F12,63).